A 335-amino-acid chain; its full sequence is Ethanol acetyltransferase 1 (335 aa).

In terms of domain architecture, AB hydrolase-1 spans 48–300; the sequence is PIVFVHGIFG…NSAHDILDQR (253 aa). Residues S121, D145, and H294 each act as charge relay system in the active site.

It belongs to the AB hydrolase superfamily.

It localises to the mitochondrion. It catalyses the reaction ethanol + acetyl-CoA = ethyl acetate + CoA. It carries out the reaction acetyl-CoA + H2O = acetate + CoA + H(+). The catalysed reaction is ethyl acetate + H2O = ethanol + acetate + H(+). Functionally, alcohol acetyltransferase that catalyzes the synthesis of ethyl acetate from ethanol and acetyl-CoA. Can also function as a thioesterase by hydrolyzing acetyl-CoA in the absence of ethanol, as well as esterase hydrolyzing ethyl acetate. This Cyberlindnera fabianii (Yeast) protein is Ethanol acetyltransferase 1 (EAT1).